Consider the following 34-residue polypeptide: uncharacterized protein (34 aa).

This is an uncharacterized protein from Escherichia coli (Bacteriophage T4).